A 110-amino-acid chain; its full sequence is UPF0122 protein BcerKBAB4_3669 (110 aa).

This sequence belongs to the UPF0122 family.

Its function is as follows. Might take part in the signal recognition particle (SRP) pathway. This is inferred from the conservation of its genetic proximity to ftsY/ffh. May be a regulatory protein. This chain is UPF0122 protein BcerKBAB4_3669, found in Bacillus mycoides (strain KBAB4) (Bacillus weihenstephanensis).